The chain runs to 542 residues: Chaperonin GroEL 1 (542 aa).

Residues 29 to 32, 86 to 90, G413, 477 to 479, and D493 contribute to the ATP site; these read TLGP, DGTTT, and NAA.

It belongs to the chaperonin (HSP60) family. In terms of assembly, forms a cylinder of 14 subunits composed of two heptameric rings stacked back-to-back. Interacts with the co-chaperonin GroES.

It is found in the cytoplasm. The enzyme catalyses ATP + H2O + a folded polypeptide = ADP + phosphate + an unfolded polypeptide.. Together with its co-chaperonin GroES, plays an essential role in assisting protein folding. The GroEL-GroES system forms a nano-cage that allows encapsulation of the non-native substrate proteins and provides a physical environment optimized to promote and accelerate protein folding. In Kineococcus radiotolerans (strain ATCC BAA-149 / DSM 14245 / SRS30216), this protein is Chaperonin GroEL 1.